The primary structure comprises 237 residues: Protein GrpE (237 aa).

Disordered regions lie at residues 27–51 and 202–237; these read EDRE…LSET and AVSS…PQHS. 2 stretches are compositionally biased toward low complexity: residues 33–45 and 204–213; these read ASTS…AEAS and SSGSPTSEPS. Positions 227–237 are enriched in polar residues; the sequence is TPASPQNPQHS.

It belongs to the GrpE family. Homodimer.

The protein localises to the cytoplasm. Functionally, participates actively in the response to hyperosmotic and heat shock by preventing the aggregation of stress-denatured proteins, in association with DnaK and GrpE. It is the nucleotide exchange factor for DnaK and may function as a thermosensor. Unfolded proteins bind initially to DnaJ; upon interaction with the DnaJ-bound protein, DnaK hydrolyzes its bound ATP, resulting in the formation of a stable complex. GrpE releases ADP from DnaK; ATP binding to DnaK triggers the release of the substrate protein, thus completing the reaction cycle. Several rounds of ATP-dependent interactions between DnaJ, DnaK and GrpE are required for fully efficient folding. The chain is Protein GrpE from Synechococcus sp. (strain JA-3-3Ab) (Cyanobacteria bacterium Yellowstone A-Prime).